Consider the following 433-residue polypeptide: Enolase (433 aa).

Residue Gln-167 coordinates (2R)-2-phosphoglycerate. The Proton donor role is filled by Glu-209. 3 residues coordinate Mg(2+): Asp-246, Glu-291, and Asp-318. Lys-326 is modified (N6-acetyllysine). 4 residues coordinate (2R)-2-phosphoglycerate: Lys-343, Arg-372, Ser-373, and Lys-394. Lys-343 (proton acceptor) is an active-site residue. An N6-(2-hydroxyisobutyryl)lysine modification is found at Lys-343.

This sequence belongs to the enolase family. As to quaternary structure, component of the RNA degradosome, a multiprotein complex involved in RNA processing and mRNA degradation. The cofactor is Mg(2+). Acetylated and 2-hydroxyisobutyrylated at Lys-326 and Lys-343, respectively, reducing the enolase activity. Deacetylated and de-2-hydroxyisobutyrylated by NpdA/CobB, increasing the enolase activity.

It localises to the cytoplasm. It is found in the secreted. The protein resides in the cell surface. It catalyses the reaction (2R)-2-phosphoglycerate = phosphoenolpyruvate + H2O. It participates in carbohydrate degradation; glycolysis; pyruvate from D-glyceraldehyde 3-phosphate: step 4/5. In terms of biological role, catalyzes the reversible conversion of 2-phosphoglycerate (2-PG) into phosphoenolpyruvate (PEP). It is essential for the degradation of carbohydrates via glycolysis. The polypeptide is Enolase (Proteus mirabilis (strain HI4320)).